Here is a 215-residue protein sequence, read N- to C-terminus: Adenylate kinase (215 aa).

10-15 provides a ligand contact to ATP; sequence GAGKGT. Residues 30 to 59 are NMP; that stretch reads STGDMLRAAIKAGTPLGLEAKKIIDEGGLV. Residues T31, R36, 57–59, 85–88, and Q92 each bind AMP; these read GLV and GFPR. Positions 122-159 are LID; the sequence is GRRVHLASGRTYHVTYNPPKVEGKDDVTGEDLIQRDDD. Residues R123 and 132-133 contribute to the ATP site; that span reads TY. AMP is bound by residues R156 and R167. Q200 lines the ATP pocket.

Belongs to the adenylate kinase family. Monomer.

It localises to the cytoplasm. The catalysed reaction is AMP + ATP = 2 ADP. Its pathway is purine metabolism; AMP biosynthesis via salvage pathway; AMP from ADP: step 1/1. Its function is as follows. Catalyzes the reversible transfer of the terminal phosphate group between ATP and AMP. Plays an important role in cellular energy homeostasis and in adenine nucleotide metabolism. The chain is Adenylate kinase from Neisseria meningitidis serogroup C (strain 053442).